Reading from the N-terminus, the 277-residue chain is Large ribosomal subunit protein uL2 (277 aa).

The tract at residues 223–277 (VTMNPVDHPHGGGEGRTSGGRHPVTPWGKPTKGMKTRSNKATDKFIVTSRHKRKK) is disordered.

This sequence belongs to the universal ribosomal protein uL2 family. In terms of assembly, part of the 50S ribosomal subunit. Forms a bridge to the 30S subunit in the 70S ribosome.

In terms of biological role, one of the primary rRNA binding proteins. Required for association of the 30S and 50S subunits to form the 70S ribosome, for tRNA binding and peptide bond formation. It has been suggested to have peptidyltransferase activity; this is somewhat controversial. Makes several contacts with the 16S rRNA in the 70S ribosome. This Azorhizobium caulinodans (strain ATCC 43989 / DSM 5975 / JCM 20966 / LMG 6465 / NBRC 14845 / NCIMB 13405 / ORS 571) protein is Large ribosomal subunit protein uL2.